Here is a 156-residue protein sequence, read N- to C-terminus: Ribosomal RNA large subunit methyltransferase H (156 aa).

S-adenosyl-L-methionine is bound by residues leucine 73, glycine 104, and 123 to 128; that span reads LSALTL.

It belongs to the RNA methyltransferase RlmH family. In terms of assembly, homodimer.

It localises to the cytoplasm. The catalysed reaction is pseudouridine(1915) in 23S rRNA + S-adenosyl-L-methionine = N(3)-methylpseudouridine(1915) in 23S rRNA + S-adenosyl-L-homocysteine + H(+). Functionally, specifically methylates the pseudouridine at position 1915 (m3Psi1915) in 23S rRNA. The polypeptide is Ribosomal RNA large subunit methyltransferase H (Shewanella piezotolerans (strain WP3 / JCM 13877)).